The primary structure comprises 778 residues: Lon protease (778 aa).

Positions 4–187 (LPVLPLTDAV…LLVGWVRAHL (184 aa)) constitute a Lon N-terminal domain. ATP is bound at residue 346 to 353 (GPPGVGKT). The Lon proteolytic domain maps to 581-762 (TAVPGVATGL…ADVLALALRP (182 aa)). Catalysis depends on residues S668 and K711.

The protein belongs to the peptidase S16 family. In terms of assembly, homohexamer. Organized in a ring with a central cavity.

Its subcellular location is the cytoplasm. The enzyme catalyses Hydrolysis of proteins in presence of ATP.. Its function is as follows. ATP-dependent serine protease that mediates the selective degradation of mutant and abnormal proteins as well as certain short-lived regulatory proteins. Required for cellular homeostasis and for survival from DNA damage and developmental changes induced by stress. Degrades polypeptides processively to yield small peptide fragments that are 5 to 10 amino acids long. Binds to DNA in a double-stranded, site-specific manner. This is Lon protease from Salinispora arenicola (strain CNS-205).